We begin with the raw amino-acid sequence, 104 residues long: T-complex protein 1 subunit zeta (104 aa).

Gly-24 provides a ligand contact to ADP. Gly-24 contributes to the ATP binding site. Asp-75 is a Mg(2+) binding site. Residues Gly-76, Thr-78, and Ser-79 each contribute to the ADP site. 2 residues coordinate ATP: Gly-76 and Thr-78.

The protein belongs to the TCP-1 chaperonin family. In terms of assembly, component of the chaperonin-containing T-complex (TRiC), a hexadecamer composed of two identical back-to-back stacked rings enclosing a protein folding chamber. Each ring is made up of eight different subunits: TCP1/CCT1, CCT2, CCT3, CCT4, CCT5, CCT6A/CCT6, CCT7, CCT8. Interacts with PACRG.

The protein localises to the cytoplasm. It catalyses the reaction ATP + H2O = ADP + phosphate + H(+). Functionally, component of the chaperonin-containing T-complex (TRiC), a molecular chaperone complex that assists the folding of actin, tubulin and other proteins upon ATP hydrolysis. The TRiC complex mediates the folding of WRAP53/TCAB1, thereby regulating telomere maintenance. This chain is T-complex protein 1 subunit zeta (CCT6), found in Sus scrofa (Pig).